The chain runs to 369 residues: Mitogen-activated protein kinase 5 (369 aa).

One can recognise a Protein kinase domain in the interval 36-322 (QPPIMPIGRG…VEEALDHPYL (287 aa)). ATP is bound by residues 42–50 (IGRGAYGIV) and K65. The active-site Proton acceptor is D162. T194 carries the phosphothreonine modification. Positions 194–196 (TEY) match the TXY motif. Phosphotyrosine is present on Y196.

This sequence belongs to the protein kinase superfamily. CMGC Ser/Thr protein kinase family. MAP kinase subfamily. Interacts with MKK1. Post-translationally, dually phosphorylated on Thr-194 and Tyr-196, which activates the enzyme.

It catalyses the reaction L-seryl-[protein] + ATP = O-phospho-L-seryl-[protein] + ADP + H(+). The enzyme catalyses L-threonyl-[protein] + ATP = O-phospho-L-threonyl-[protein] + ADP + H(+). With respect to regulation, activated by threonine and tyrosine phosphorylation. Its function is as follows. Involved in disease resistance and abiotic stress tolerance signaling pathways. The sequence is that of Mitogen-activated protein kinase 5 (MPK5) from Oryza sativa subsp. indica (Rice).